Reading from the N-terminus, the 162-residue chain is Flagellar assembly factor FliW (162 aa).

It belongs to the FliW family. Interacts with translational regulator CsrA and flagellin(s).

Its subcellular location is the cytoplasm. Its function is as follows. Acts as an anti-CsrA protein, binds CsrA and prevents it from repressing translation of its target genes, one of which is flagellin. Binds to flagellin and participates in the assembly of the flagellum. The chain is Flagellar assembly factor FliW from Magnetococcus marinus (strain ATCC BAA-1437 / JCM 17883 / MC-1).